We begin with the raw amino-acid sequence, 160 residues long: Transcriptional repressor NrdR (160 aa).

A zinc finger lies at 3–34; it reads CPFCGHADTQVVDSRVSEEGDTIRRRRRCLSC. The ATP-cone domain maps to 49–139; that stretch reads PTVVKRDGSR…VYKSFEDIGE (91 aa).

This sequence belongs to the NrdR family. Zn(2+) serves as cofactor.

Functionally, negatively regulates transcription of bacterial ribonucleotide reductase nrd genes and operons by binding to NrdR-boxes. In Bordetella avium (strain 197N), this protein is Transcriptional repressor NrdR.